Consider the following 602-residue polypeptide: MTDTDLITAGESTDGKPSDAAATDPPDLNADEPAGSLATMVLPELRALANRAGVKGTSGMRKNELIAAIEEIRRQANGAPAVDRSAQEHDKGDRPPSSEAPATQGEQTPTEQIDSQSQQVRPERRSATREAGPSGSGERAGTAADDTDNRQGGQQDAKTEERGTDAGGDQGGDQQASGGQQARGDEDGEARQGRRGRRFRDRRRRGERSGDGAEAELREDDVVQPVAGILDVLDNYAFVRTSGYLPGPHDVYVSMNMVRKNGMRRGDAVTGAVRVPKEGEQPNQRQKFNPLVRLDSINGGSVEDAKKRPEFGKLTPLYPNQRLRLETSTERLTTRVIDLIMPIGKGQRALIVSPPKAGKTTILQDIANAITRNNPECHLMVVLVDERPEEVTDMQRSVKGEVIASTFDRPPSDHTSVAELAIERAKRLVEQGKDVVVLLDSITRLGRAYNNASPASGRILSGGVDSTALYPPKRFLGAARNIEEGGSLTIIATAMVETGSTGDTVIFEEFKGTGNAELKLDRKIAERRVFPAVDVNPSGTRKDELLLSPDEFAIVHKLRRVLSGLDSHQAIDLLMSQLRKTKNNYEFLVQVSKTTPGSMDSD.

2 disordered regions span residues 1–35 and 76–216; these read MTDTDLITAGESTDGKPSDAAATDPPDLNADEPAG and ANGA…AEAE. The span at 85-96 shows a compositional bias: basic and acidic residues; that stretch reads SAQEHDKGDRPP. Positions 100-120 are enriched in polar residues; the sequence is APATQGEQTPTEQIDSQSQQV. The span at 172-182 shows a compositional bias: low complexity; that stretch reads GDQQASGGQQA. Residues 183 to 192 show a composition bias toward basic and acidic residues; the sequence is RGDEDGEARQ. The span at 193-206 shows a compositional bias: basic residues; it reads GRRGRRFRDRRRRG. A Rho RNA-BD domain is found at 223–301; that stretch reads VQPVAGILDV…VRLDSINGGS (79 aa). Residues 344-349, 356-361, and Arg387 contribute to the ATP site; these read GKGQRA and KAGKTT.

Belongs to the Rho family. In terms of assembly, homohexamer. The homohexamer assembles into an open ring structure.

Facilitates transcription termination by a mechanism that involves Rho binding to the nascent RNA, activation of Rho's RNA-dependent ATPase activity, and release of the mRNA from the DNA template. This is Transcription termination factor Rho from Mycobacterium bovis (strain ATCC BAA-935 / AF2122/97).